Consider the following 280-residue polypeptide: F-box/SPRY domain-containing protein 1 (280 aa).

The tract at residues 1-28 is disordered; the sequence is MAAAINAAVPSPPVAPSAPPPPPPPLGQ. Over residues 10–26 the composition is skewed to pro residues; the sequence is PSPPVAPSAPPPPPPPL. Residues 27 to 76 form the F-box domain; it reads GQASDRFPSLVLELVFSYLDLPDLRSCGLVCKRWYRCLHGDKNSDVWRSL. The B30.2/SPRY domain maps to 86-278; sequence LRTDILCNLR…VTLVYLGKPL (193 aa).

This sequence belongs to the FBXO45/Fsn family. Probable component of a E3 ubiquitin ligase complex.

It participates in protein modification; protein ubiquitination. The chain is F-box/SPRY domain-containing protein 1 (fbxo45) from Xenopus laevis (African clawed frog).